Reading from the N-terminus, the 366-residue chain is tRNA/tmRNA (uracil-C(5))-methyltransferase (366 aa).

Residues glutamine 189, tyrosine 217, asparagine 222, glutamate 238, and aspartate 298 each contribute to the S-adenosyl-L-methionine site. The active-site Nucleophile is the cysteine 323. Catalysis depends on glutamate 357, which acts as the Proton acceptor.

This sequence belongs to the class I-like SAM-binding methyltransferase superfamily. RNA M5U methyltransferase family. TrmA subfamily.

The enzyme catalyses uridine(54) in tRNA + S-adenosyl-L-methionine = 5-methyluridine(54) in tRNA + S-adenosyl-L-homocysteine + H(+). The catalysed reaction is uridine(341) in tmRNA + S-adenosyl-L-methionine = 5-methyluridine(341) in tmRNA + S-adenosyl-L-homocysteine + H(+). In terms of biological role, dual-specificity methyltransferase that catalyzes the formation of 5-methyluridine at position 54 (m5U54) in all tRNAs, and that of position 341 (m5U341) in tmRNA (transfer-mRNA). This chain is tRNA/tmRNA (uracil-C(5))-methyltransferase, found in Shewanella oneidensis (strain ATCC 700550 / JCM 31522 / CIP 106686 / LMG 19005 / NCIMB 14063 / MR-1).